The primary structure comprises 192 residues: Ribose 1,5-bisphosphate phosphokinase PhnN (192 aa).

15-22 serves as a coordination point for ATP; that stretch reads GPSGAGKD.

Belongs to the ribose 1,5-bisphosphokinase family.

The catalysed reaction is alpha-D-ribose 1,5-bisphosphate + ATP = 5-phospho-alpha-D-ribose 1-diphosphate + ADP. It participates in metabolic intermediate biosynthesis; 5-phospho-alpha-D-ribose 1-diphosphate biosynthesis; 5-phospho-alpha-D-ribose 1-diphosphate from D-ribose 5-phosphate (route II): step 3/3. Its function is as follows. Catalyzes the phosphorylation of ribose 1,5-bisphosphate to 5-phospho-D-ribosyl alpha-1-diphosphate (PRPP). The protein is Ribose 1,5-bisphosphate phosphokinase PhnN of Brucella abortus biovar 1 (strain 9-941).